The chain runs to 253 residues: Methionine-R-sulfoxide reductase B3, mitochondrial (253 aa).

An N-terminal signal peptide occupies residues 1–56 (MPPAAPSVARSREGGGIGQRRLVFPKSARRTLPCPIALCLGLCLAAAAATTTRASA). At Lys102 the chain carries N6-acetyllysine. Positions 107–229 (QQELRKRLTP…NSASLSFTPA (123 aa)) constitute a MsrB domain. 4 residues coordinate Zn(2+): Cys146, Cys149, Cys195, and Cys198. Cys218 acts as the Nucleophile in catalysis. Residues 227 to 253 (TPADSSEAEGSGIKESGSPAAADRAEL) form a disordered region. Ser244 carries the phosphoserine modification. Residues 250–253 (RAEL) carry the Endoplasmic reticulum retention signal motif.

It belongs to the MsrB Met sulfoxide reductase family. As to quaternary structure, monomer. It depends on Zn(2+) as a cofactor. In terms of tissue distribution, widely expressed. Detected in the sensory epithelia of the organ of Corti and vestibular end organs as early as P2 up to adulthood (at protein level). In the organ of Corti, present in inner and outer hair cells and, to a lesser extent, in supporting cells (at protein level). In hair cells, distributed throughout the cell body. Barely detectable level in stereocilia. Also observed in spiral ganglion neurons, but not in the stria vascularis. In the vestibular end organs, found throughout the sensory epithelium, but more intense expression in hair cells than in supporting cells (at protein level). In vestibular hair cells, present within cell bodies and to a lesser extent in kinocilia. Barely detectable in stereocilia.

The protein resides in the endoplasmic reticulum. It carries out the reaction L-methionyl-[protein] + [thioredoxin]-disulfide + H2O = L-methionyl-(R)-S-oxide-[protein] + [thioredoxin]-dithiol. It catalyses the reaction [thioredoxin]-disulfide + L-methionine + H2O = L-methionine (R)-S-oxide + [thioredoxin]-dithiol. Its function is as follows. Catalyzes the reduction of free and protein-bound methionine sulfoxide to methionine. The polypeptide is Methionine-R-sulfoxide reductase B3, mitochondrial (Msrb3) (Mus musculus (Mouse)).